The following is a 41-amino-acid chain: Photosystem II reaction center protein X (41 aa).

At 2 to 6 the chain is on the lumenal side; sequence TITPS. Residues 7 to 29 traverse the membrane as a helical segment; it reads LKGFFIGLLSGAVVLGLTFAVLI. Topologically, residues 30 to 41 are cytoplasmic; sequence AISQIDKVQRSL.

Belongs to the PsbX family. Type 1 subfamily. As to quaternary structure, PSII is composed of 1 copy each of membrane proteins PsbA, PsbB, PsbC, PsbD, PsbE, PsbF, PsbH, PsbI, PsbJ, PsbK, PsbL, PsbM, PsbT, PsbX, PsbY, PsbZ, Psb30/Ycf12, peripheral proteins PsbO, CyanoQ (PsbQ), PsbU, PsbV and a large number of cofactors. It forms dimeric complexes. Part of a photosystem II (PSII) assembly intermediate complex PSII-I; crystallized from a strain deleted of psbJ, it forms monomeric PSII before addition of the oxygen evolving complex. PSII-I includes 3 assembly factors not found in mature PSII (Psb27, Psb28 and Psb34). The cofactor is PSII binds multiple chlorophylls, carotenoids and specific lipids..

The protein localises to the cellular thylakoid membrane. In terms of biological role, involved in the binding and/or turnover of quinones at the Q(B) site of photosystem II (PSII). PSII is a light-driven water plastoquinone oxidoreductase, using light energy to abstract electrons from H(2)O, generating a proton gradient subsequently used for ATP formation. The protein is Photosystem II reaction center protein X of Thermosynechococcus vestitus (strain NIES-2133 / IAM M-273 / BP-1).